Consider the following 878-residue polypeptide: MSNERYNARESEPKWQAKWDEAKIFATRNDDPRPKYYVLEMFPYPSGRIHMGHVRNYTMGDVVARTMRARGHNVLHPMGWDAFGLPAENAAIERKVAPKAWTYANIAAMKKQLQTMGLSLDWAREFATCDPTYYKHQQKMFLDFLKAGLAERETRKLNWDPVDMTVLANEQVIDGRGWRSGAVVEQREMNQWVFKITRYAQELLDALETLDRWPDKVRLMQRNWIGRSEGLLVRFALDSATTPAGETELKIFTTRPDTLFGAKFMAIAADHPLAQAAAAKDPKIAAFVEDCKKRGTAQAEIDTAEKLGIDTGIRALHPFDPNWQIPVYVANFVLMEYGTGAIFGCPAHDQRDLDFVNKYQLGNTPVVCPEGQDPSSFVITDEAYDGDGRLINSRFLDGMSIAEAKEDVAKRLETATLGNAPVGERKVNFRLRDWGISRQRYWGCPIPVIHCEVCGVVPVPDKDLPVVLPEDVSFDKPGNALDHHPTWKHTACPQCGAKATRETDTMDTFVDSSWYFARFTDPWNENAPTTPDVVNRMLPVDQYIGGVEHAILHLLYSRFFTRAMKATGHVGLDEPFRGMFTQGMVVHETYRKADGMFASPAEVAIVAEGDGRRATLLDDGTPIEIGPIEKMSKSKRNTVDPDDIIGSYGADTARWFMLSDSPPDRDVIWSEEGVKGASRFVQRLWRMINDAAEIAKAAPAARPDAFGPEALAVRKAAHGALDKVLSGIERLAFNVSLAHIREFSNSLGEALARPGAASPDVAPDLAWAIREGAVILVQLFHPMMPHLAEECWAALGQPGLVSEALWPQIERDLLLEDSITLPVQVNGKKRGEVTVARDANNPEIEAAVLALDAVRQALDGKPVRKVIVVPQRIVNVVG.

The 'HIGH' region motif lies at 43 to 53 (PYPSGRIHMGH). Positions 630–634 (KMSKS) match the 'KMSKS' region motif. Lysine 633 contacts ATP.

The protein belongs to the class-I aminoacyl-tRNA synthetase family.

It localises to the cytoplasm. The enzyme catalyses tRNA(Leu) + L-leucine + ATP = L-leucyl-tRNA(Leu) + AMP + diphosphate. In Rhodopseudomonas palustris (strain BisB5), this protein is Leucine--tRNA ligase.